A 469-amino-acid polypeptide reads, in one-letter code: Glutamate--tRNA ligase 1 (469 aa).

The 'HIGH' region signature appears at 8–18 (PSPTGYLHIGG). Positions 117-137 (TPRYDGTWRPEPGKELPPVPA) are disordered. The short motif at 240–244 (KLSKR) is the 'KMSKS' region element. K243 provides a ligand contact to ATP.

This sequence belongs to the class-I aminoacyl-tRNA synthetase family. Glutamate--tRNA ligase type 1 subfamily. As to quaternary structure, monomer.

It is found in the cytoplasm. The enzyme catalyses tRNA(Glu) + L-glutamate + ATP = L-glutamyl-tRNA(Glu) + AMP + diphosphate. Functionally, catalyzes the attachment of glutamate to tRNA(Glu) in a two-step reaction: glutamate is first activated by ATP to form Glu-AMP and then transferred to the acceptor end of tRNA(Glu). This is Glutamate--tRNA ligase 1 from Aliarcobacter butzleri (strain RM4018) (Arcobacter butzleri).